Reading from the N-terminus, the 185-residue chain is Elongation factor P (185 aa).

The protein belongs to the elongation factor P family.

The protein localises to the cytoplasm. The protein operates within protein biosynthesis; polypeptide chain elongation. In terms of biological role, involved in peptide bond synthesis. Stimulates efficient translation and peptide-bond synthesis on native or reconstituted 70S ribosomes in vitro. Probably functions indirectly by altering the affinity of the ribosome for aminoacyl-tRNA, thus increasing their reactivity as acceptors for peptidyl transferase. The sequence is that of Elongation factor P from Bacillus cereus (strain G9842).